Here is a 147-residue protein sequence, read N- to C-terminus: Large ribosomal subunit protein uL15 (147 aa).

The tract at residues 1–57 is disordered; it reads MDLSNLSPAPGSTKARKRLGRGPGSGNGTTAGRGNKGHNSRSGGGVRPGFEGGQMPL. Composition is skewed to gly residues over residues 21 to 31 and 42 to 52; these read RGPGSGNGTTA and SGGGVRPGFEG.

Belongs to the universal ribosomal protein uL15 family. Part of the 50S ribosomal subunit.

In terms of biological role, binds to the 23S rRNA. The chain is Large ribosomal subunit protein uL15 from Desulfosudis oleivorans (strain DSM 6200 / JCM 39069 / Hxd3) (Desulfococcus oleovorans).